The chain runs to 563 residues: Urocanate hydratase (563 aa).

Residues Gly-53–Gly-54, Gln-131, Gly-177–Gly-179, Glu-197, Arg-202, Asn-243–Ala-244, Gln-264–His-268, Tyr-274–Leu-275, and Tyr-323 contribute to the NAD(+) site. Residue Cys-411 is part of the active site. Gly-493 contributes to the NAD(+) binding site.

Belongs to the urocanase family. NAD(+) is required as a cofactor.

The protein localises to the cytoplasm. The catalysed reaction is 4-imidazolone-5-propanoate = trans-urocanate + H2O. It participates in amino-acid degradation; L-histidine degradation into L-glutamate; N-formimidoyl-L-glutamate from L-histidine: step 2/3. Functionally, catalyzes the conversion of urocanate to 4-imidazolone-5-propionate. In Yersinia pestis bv. Antiqua (strain Antiqua), this protein is Urocanate hydratase.